Reading from the N-terminus, the 2155-residue chain is Alpha-tectorin (2155 aa).

Positions 1-22 (MNYSSFLRIWVSFIFALVQHQA) are cleaved as a signal peptide. Residues asparagine 34, asparagine 187, asparagine 215, asparagine 278, asparagine 455, asparagine 506, asparagine 528, and asparagine 560 are each glycosylated (N-linked (GlcNAc...) asparagine). One can recognise an NIDO domain in the interval 98 to 252 (PFWADVHNGI…GRWAFKVDGK (155 aa)). Positions 260-314 (CTSRGQFLRRGEVFWDDLNCTVKCRCLDFNNEIYCQEASCSPYEVCEPKGKFFYC) constitute a VWFC domain. A VWFD 1 domain is found at 320-500 (STCVVFGEPH…RVYHADWKCD (181 aa)). 2 disulfides stabilise this stretch: cysteine 322/cysteine 461 and cysteine 344/cysteine 499. Residues 597 to 650 (CPSFSHYSVCTSSCPDTCSDLTASRNCATPCTEGCECNQGFVLSTSQCVPLHKC) form the TIL 1 domain. Residues asparagine 670, asparagine 687, asparagine 813, asparagine 843, asparagine 855, asparagine 898, asparagine 920, asparagine 931, and asparagine 949 are each glycosylated (N-linked (GlcNAc...) asparagine). In terms of domain architecture, VWFD 2 spans 711-886 (TVCLLSQNQV…SWTTFEEICN (176 aa)). Cysteine 713 and cysteine 849 are oxidised to a cystine. A TIL 2 domain is found at 984 to 1036 (CPENSHFEECITCTETCETLTLGPICVDSCSEGCQCDEGYALLGSQCVTRSEC). 3 N-linked (GlcNAc...) asparagine glycosylation sites follow: asparagine 1048, asparagine 1235, and asparagine 1364. The region spanning 1098–1278 (ASCIVSGYGH…SWVKRDTFCQ (181 aa)) is the VWFD 3 domain. 2 cysteine pairs are disulfide-bonded: cysteine 1100/cysteine 1241 and cysteine 1122/cysteine 1277. The TIL 3 domain maps to 1372 to 1425 (CPPNSHYESCVSVCQPRCAAIRLKSDCSHYCVEGCHCDAGYVLNGKSCILPHSC). One can recognise a VWFD 4 domain in the interval 1485 to 1666 (SYCLAAGGGV…QKRPLAPSCN (182 aa)). 7 cysteine pairs are disulfide-bonded: cysteine 1487–cysteine 1622, cysteine 1509–cysteine 1665, cysteine 1717–cysteine 1775, cysteine 1741–cysteine 1784, cysteine 1786–cysteine 1818, cysteine 1806–cysteine 1898, and cysteine 1837–cysteine 1857. N-linked (GlcNAc...) asparagine glycosylation is found at asparagine 1538, asparagine 1565, asparagine 1756, asparagine 1772, asparagine 1794, asparagine 1851, asparagine 1864, asparagine 1880, asparagine 1920, and asparagine 1939. Residues 1805–2059 (TCKAAQMEVS…YSCKITCPHN (255 aa)) enclose the ZP domain. 3 cysteine pairs are disulfide-bonded: cysteine 1980/cysteine 2040, cysteine 2001/cysteine 2056, and cysteine 2045/cysteine 2052. Residue asparagine 2091 is the site of GPI-anchor amidated asparagine attachment. The propeptide at 2092–2155 (GGCEQICTSR…HFVYKSGTTS (64 aa)) is removed in mature form.

As to quaternary structure, may form homomeric filament after self-association or heteromeric filament after association with beta-tectorin. Interacts with CEACAM16. Post-translationally, the presence of a hydrophobic C-terminus preceded by a potential cleavage site strongly suggests that tectorins are synthesized as glycosylphosphatidylinositol-linked, membrane-bound precursors. Tectorins are targeted to the apical surface of the inner ear epithelia by the lipid and proteolytically released into the extracellular compartment.

The protein localises to the cell membrane. The protein resides in the secreted. Its subcellular location is the extracellular space. It is found in the extracellular matrix. Functionally, one of the major non-collagenous components of the tectorial membrane. The tectorial membrane is an extracellular matrix of the inner ear that covers the neuroepithelium of the cochlea and contacts the stereocilia bundles of specialized sensory hair cells. Sound induces movement of these hair cells relative to the tectorial membrane, deflects the stereocilia and leads to fluctuations in hair-cell membrane potential, transducing sound into electrical signals. In Homo sapiens (Human), this protein is Alpha-tectorin (TECTA).